The primary structure comprises 401 residues: L-rhamnonate dehydratase (401 aa).

His-29 and Arg-55 together coordinate substrate. Positions 222, 248, and 276 each coordinate Mg(2+). The Proton acceptor role is filled by His-325. Residue Glu-345 coordinates substrate.

It belongs to the mandelate racemase/muconate lactonizing enzyme family. RhamD subfamily. In terms of assembly, homooctamer; tetramer of dimers. The cofactor is Mg(2+).

It catalyses the reaction L-rhamnonate = 2-dehydro-3-deoxy-L-rhamnonate + H2O. In terms of biological role, catalyzes the dehydration of L-rhamnonate to 2-keto-3-deoxy-L-rhamnonate (KDR). In Salmonella heidelberg (strain SL476), this protein is L-rhamnonate dehydratase.